The sequence spans 128 residues: MTTKRKAYVREMKANWWTKLDFYRMYMIREATCIATIWFCLVLLYGVISLGGRHIENFISFSQNPLVVILNIISLAGLLYHAATLYVMTPQVLTIVVKNERLNPNILKNALWAITGLVSLLALVLVYI.

3 consecutive transmembrane segments (helical) span residues 31–51 (ATCIATIWFCLVLLYGVISLG), 67–87 (VVILNIISLAGLLYHAATLYV), and 106–126 (ILKNALWAITGLVSLLALVLV).

The protein belongs to the FrdC family. In terms of assembly, part of an enzyme complex containing four subunits: a flavoprotein (FrdA), an iron-sulfur protein (FrdB), and two hydrophobic anchor proteins (FrdC and FrdD).

Its subcellular location is the cell inner membrane. Its function is as follows. Anchors the catalytic components of the fumarate reductase complex to the cell membrane, binds quinones. In Haemophilus ducreyi (strain 35000HP / ATCC 700724), this protein is Fumarate reductase subunit C.